We begin with the raw amino-acid sequence, 273 residues long: Urease accessory protein UreD (273 aa).

It belongs to the UreD family. As to quaternary structure, ureD, UreF and UreG form a complex that acts as a GTP-hydrolysis-dependent molecular chaperone, activating the urease apoprotein by helping to assemble the nickel containing metallocenter of UreC. The UreE protein probably delivers the nickel.

It is found in the cytoplasm. Functionally, required for maturation of urease via the functional incorporation of the urease nickel metallocenter. This is Urease accessory protein UreD from Rhizobium johnstonii (strain DSM 114642 / LMG 32736 / 3841) (Rhizobium leguminosarum bv. viciae).